Here is a 476-residue protein sequence, read N- to C-terminus: Nodulation protein NoeA (476 aa).

Not known; does not seem to participate in nod factor synthesis but required for nodulation on some specific Medicago species such as M.littoralis. This Rhizobium meliloti (strain 1021) (Ensifer meliloti) protein is Nodulation protein NoeA (noeA).